A 751-amino-acid chain; its full sequence is Methionine--tRNA ligase, cytoplasmic (751 aa).

Residue Ser-2 is modified to N-acetylserine. The tract at residues 36–92 (LKPEVDNDNAAMELRNTKEPFLLFDANAILRYVMDDFEGQTSDKYQFALASLQNLLY) is interaction with ARC1. The 'HIGH' region motif lies at 205 to 215 (PYVNNVPHLGN). Lys-411 contributes to the ATP binding site. A 'KMSKS' region motif is present at residues 525 to 529 (KFSKS).

It belongs to the class-I aminoacyl-tRNA synthetase family. In terms of assembly, component of a yeast aminoacyl-tRNA synthase (aaRS) complex formed by methionyl-tRNA synthase MES1, glutamyl-tRNA synthase GUS1 and the tRNA aminoacylation cofactor ARC1 in a stoichiometric complex. Interacts (via N-ter) with ARC1 (via N-ter). Can also form a stable binary complex with ARC1 that is functional in terms of aminoacylation. ARC1 increases the affinity for cognate tRNAs due to the presence of a tRNA binding domain in the middle and C-terminal part of ARC1.

The protein localises to the cytoplasm. The enzyme catalyses tRNA(Met) + L-methionine + ATP = L-methionyl-tRNA(Met) + AMP + diphosphate. In terms of biological role, catalyzes the attachment of methionine to tRNA(Met) in a two-step reaction: methionine is first activated by ATP to form Met-AMP and then transferred to the acceptor end of tRNA(Met). The sequence is that of Methionine--tRNA ligase, cytoplasmic (MES1) from Saccharomyces cerevisiae (strain ATCC 204508 / S288c) (Baker's yeast).